Consider the following 304-residue polypeptide: Nod factor export ATP-binding protein I (304 aa).

Residues 6–236 enclose the ABC transporter domain; that stretch reads IEFDKVKKSY…EIGCDVIEIF (231 aa). 38 to 45 contacts ATP; that stretch reads GPNGAGKT.

Belongs to the ABC transporter superfamily. Lipooligosaccharide exporter (TC 3.A.1.102) family. In terms of assembly, the complex is composed of two ATP-binding proteins (NodI) and two transmembrane proteins (NodJ).

It is found in the cell inner membrane. Its function is as follows. Part of the ABC transporter complex NodIJ involved in the export of the nodulation factors (Nod factors), the bacterial signal molecules that induce symbiosis and subsequent nodulation induction. Nod factors are LCO (lipo-chitin oligosaccharide), a modified beta-1,4-linked N-acetylglucosamine oligosaccharide. This subunit is responsible for energy coupling to the transport system. This is Nod factor export ATP-binding protein I from Paraburkholderia xenovorans (strain LB400).